Here is a 109-residue protein sequence, read N- to C-terminus: Hainantoxin-XVIII-4 (109 aa).

An N-terminal signal peptide occupies residues 1-18 (MKLSIIIIATSLVIAVVA). Positions 19–46 (FPSKDSKAIENDKTEQRMEIVVQETARA) are excised as a propeptide. Cystine bridges form between Cys-55/Cys-68, Cys-59/Cys-108, and Cys-61/Cys-81.

The protein belongs to the neurotoxin 25 family. F7 subfamily. As to expression, expressed by the venom gland.

It is found in the secreted. Putative ion channel inhibitor. The sequence is that of Hainantoxin-XVIII-4 from Cyriopagopus hainanus (Chinese bird spider).